A 572-amino-acid chain; its full sequence is Arginine--tRNA ligase (572 aa).

The 'HIGH' region signature appears at 127-137 (ANPTGPLHVGH).

It belongs to the class-I aminoacyl-tRNA synthetase family. As to quaternary structure, monomer.

The protein resides in the cytoplasm. It carries out the reaction tRNA(Arg) + L-arginine + ATP = L-arginyl-tRNA(Arg) + AMP + diphosphate. This Vesicomyosocius okutanii subsp. Calyptogena okutanii (strain HA) protein is Arginine--tRNA ligase.